The following is a 54-amino-acid chain: Large ribosomal subunit protein bL32 (54 aa).

A disordered region spans residues 1–54 (MAVQQNRKTRSRRGMRRSHDALTAAQLSVDSTSGETHRRHHVTADGYYRGKKVI). A compositionally biased stretch (basic residues) spans 7–16 (RKTRSRRGMR). The segment covering 25-34 (AQLSVDSTSG) has biased composition (polar residues).

The protein belongs to the bacterial ribosomal protein bL32 family.

The sequence is that of Large ribosomal subunit protein bL32 from Tolumonas auensis (strain DSM 9187 / NBRC 110442 / TA 4).